The following is a 616-amino-acid chain: Bifunctional 2-aminoethylphosphonate cytidylyltransferase/aminotransferase (616 aa).

Residues 1 to 240 (MIKQAVILAG…VKNIYPHIVE (240 aa)) form a 2-aminoethylphosphonate cytidylyltransferase region. 8 residues coordinate CMP-(2-aminoethyl)phosphonate: Leu8, Gly10, Gly11, Lys25, Thr83, Thr88, Glu104, and Ser105. 2 residues coordinate Mg(2+): Asp106 and Asp136. Residues Asp136, Lys153, and Glu196 each coordinate CMP-(2-aminoethyl)phosphonate. 2 residues coordinate Mg(2+): Glu220 and Asp222. The interval 250-616 (EVLLNPGPAT…EYMNGIGVGV (367 aa)) is 2-aminoethylphosphonate aminotransferase. Pyridoxal 5'-phosphate-binding residues include Ser313, Gly314, Thr315, Thr390, Lys441, and Thr490.

It in the N-terminal section; belongs to the LicC/PntC cytidylyltransferase family. The protein in the C-terminal section; belongs to the class-V pyridoxal-phosphate-dependent aminotransferase family. PhnW subfamily. As to quaternary structure, homodimer. The cofactor is Mg(2+). Zn(2+) serves as cofactor. Pyridoxal 5'-phosphate is required as a cofactor.

The catalysed reaction is (2-aminoethyl)phosphonate + CTP = CMP-(2-aminoethyl)phosphonate + diphosphate. It catalyses the reaction (2-aminoethyl)phosphonate + pyruvate = phosphonoacetaldehyde + L-alanine. The protein operates within phosphorus metabolism; phosphonate biosynthesis. Cytidylyltransferase activity is inhibited in the presence of EDTA and is restored by the addition of Mg(2+) or Zn(2+). In terms of biological role, bifunctional transferase involved in the biosynthesis of cell-surface phosphonates. The aminotransferase region catalyzes the transformation of phosphonoacetaldehyde (PnAA) to 2-aminoethylphosphonate (AEP). The cytidylyltransferase region catalyzes the activation of 2-aminoethylphosphonate (AEP) to CMP-2-aminoethylphosphonate (CMP-AEP). Cannot use phosphocholine. Exhibits strong activity towards CTP, limited activity towards ATP and no activity with GTP. The sequence is that of Bifunctional 2-aminoethylphosphonate cytidylyltransferase/aminotransferase from Treponema denticola (strain ATCC 35405 / DSM 14222 / CIP 103919 / JCM 8153 / KCTC 15104).